A 126-amino-acid polypeptide reads, in one-letter code: Fluoride-specific ion channel FluC 2 (126 aa).

Transmembrane regions (helical) follow at residues isoleucine 11–leucine 31, glycine 34–tyrosine 54, glycine 66–valine 86, and phenylalanine 93–phenylalanine 113. Residues glycine 76 and threonine 79 each contribute to the Na(+) site.

It belongs to the fluoride channel Fluc/FEX (TC 1.A.43) family.

The protein resides in the cell membrane. The catalysed reaction is fluoride(in) = fluoride(out). With respect to regulation, na(+) is not transported, but it plays an essential structural role and its presence is essential for fluoride channel function. Functionally, fluoride-specific ion channel. Important for reducing fluoride concentration in the cell, thus reducing its toxicity. The polypeptide is Fluoride-specific ion channel FluC 2 (Methanosarcina acetivorans (strain ATCC 35395 / DSM 2834 / JCM 12185 / C2A)).